The sequence spans 82 residues: Small ribosomal subunit protein bS20 (82 aa).

Belongs to the bacterial ribosomal protein bS20 family.

In terms of biological role, binds directly to 16S ribosomal RNA. The protein is Small ribosomal subunit protein bS20 of Streptococcus pyogenes serotype M12 (strain MGAS2096).